The following is a 458-amino-acid chain: MSTGKIIQVIGAVIDVEFARDNTPKVYDALNVVEAGLVLEVQQQIGDGVVRTIAMGSSDGLRRGMEVKNTNAPISVPVGHGTLGRIMNVLGEPIDEAGPIEYTEKRSIHQAPPAYDELALSTEILETGIKVVDLICPFAKGGKVGLFGGAGVGKTVTMMELINNIAKEHSGYSVFAGVGERTREGNDFYYEMKDSNVLDKVSLVYGQMNEPPGNRLRVALSGLTIAEGFRDEKRDVLMFIDNIYRYTLAGTEVSALLGRMPSAVGYQPTLAAEMGALQERITSTKTGSITSVQAVYVPADDLTDPSPATTFSHLDATIVLSRQIAELGIYPAVDPLDSTSRQLDPLVVGQDHYETARAVQKVLQRYKELKDIIAILGMDELSDEDKKIVDRARKIQRFLSQPFHVAEVFTGNPGKFVSLKDTVASFKAIVNGEYDHLPEQAFYMVGSIQEAIEKAKTL.

148–155 contributes to the ATP binding site; the sequence is GGAGVGKT.

Belongs to the ATPase alpha/beta chains family. F-type ATPases have 2 components, CF(1) - the catalytic core - and CF(0) - the membrane proton channel. CF(1) has five subunits: alpha(3), beta(3), gamma(1), delta(1), epsilon(1). CF(0) has three main subunits: a(1), b(2) and c(9-12). The alpha and beta chains form an alternating ring which encloses part of the gamma chain. CF(1) is attached to CF(0) by a central stalk formed by the gamma and epsilon chains, while a peripheral stalk is formed by the delta and b chains.

The protein localises to the cell inner membrane. It catalyses the reaction ATP + H2O + 4 H(+)(in) = ADP + phosphate + 5 H(+)(out). Its function is as follows. Produces ATP from ADP in the presence of a proton gradient across the membrane. The catalytic sites are hosted primarily by the beta subunits. The chain is ATP synthase subunit beta from Francisella tularensis subsp. tularensis (strain FSC 198).